Reading from the N-terminus, the 65-residue chain is Alpha-toxin Bs-Tx28 (65 aa).

The region spanning 3 to 65 is the LCN-type CS-alpha/beta domain; sequence RDAYIADDKN…VPIRIPGKCR (63 aa). 4 cysteine pairs are disulfide-bonded: Cys-13–Cys-64, Cys-17–Cys-37, Cys-23–Cys-47, and Cys-27–Cys-49. An Arginine amide modification is found at Arg-65.

The protein belongs to the long (4 C-C) scorpion toxin superfamily. Sodium channel inhibitor family. Alpha subfamily. Expressed by the venom gland.

It is found in the secreted. Alpha toxins bind voltage-independently at site-3 of sodium channels (Nav) and inhibit the inactivation of the activated channels, thereby blocking neuronal transmission. This toxin inhibits the inactivation of activated TTX-sensitive sodium channels (Nav). The polypeptide is Alpha-toxin Bs-Tx28 (Hottentotta tamulus sindicus (Scorpion)).